Here is a 336-residue protein sequence, read N- to C-terminus: Acyl-CoA-binding domain-containing protein 4 (336 aa).

Residues 12–32 traverse the membrane as a helical; Signal-anchor segment; the sequence is AVIGLLFAFLVAKLISTVIAF. Positions 40–88 are disordered; that stretch reads TRSTPTSPSAADTPAAPAPPPASLDGGHGDTSDGSGSDSDSDWEGVEST. Low complexity predominate over residues 42–54; that stretch reads STPTSPSAADTPA. Residues 78–88 show a composition bias toward acidic residues; it reads SDSDWEGVEST. Residues 90–178 enclose the ACB domain; sequence LDEEFSAASA…VDELFPNWSM (89 aa). An acyl-CoA-binding positions include 120–124, Lys-142, Lys-146, and Tyr-165; that span reads YGLYK. A glycan (N-linked (GlcNAc...) asparagine) is linked at Asn-175. The disordered stretch occupies residues 179–202; that stretch reads GSSTKRKDEDTTVSASSSKGPMGP. Asn-216 is a glycosylation site (N-linked (GlcNAc...) asparagine). ANK repeat units follow at residues 251–280 and 284–313; these read EGRT…DVNA and EGQT…DVQI.

It belongs to the ACBP family. As to expression, highly expressed in leaves. Expressed at low levels in roots and seeds.

Its subcellular location is the endoplasmic reticulum membrane. Its function is as follows. Binds medium- and long-chain acyl-CoA esters with high affinity. Can interact in vitro with palmitoyl-CoA, linoleoyl-CoA and linolenoyl-CoA. Binds phosphatidic acid (PA) and phosphatidylcholine (PC) in vitro. May play a role in the biosynthesis of phospholipids. The sequence is that of Acyl-CoA-binding domain-containing protein 4 from Oryza sativa subsp. japonica (Rice).